The primary structure comprises 368 residues: o-succinylbenzoate synthase (368 aa).

Catalysis depends on K183, which acts as the Proton donor. Mg(2+)-binding residues include D213, E239, and D264. K290 serves as the catalytic Proton acceptor.

The protein belongs to the mandelate racemase/muconate lactonizing enzyme family. MenC type 1 subfamily. As to quaternary structure, monomer. Requires a divalent metal cation as cofactor.

It catalyses the reaction (1R,6R)-6-hydroxy-2-succinyl-cyclohexa-2,4-diene-1-carboxylate = 2-succinylbenzoate + H2O. The protein operates within quinol/quinone metabolism; 1,4-dihydroxy-2-naphthoate biosynthesis; 1,4-dihydroxy-2-naphthoate from chorismate: step 4/7. It participates in cofactor biosynthesis; phylloquinone biosynthesis. In terms of biological role, converts 2-succinyl-6-hydroxy-2,4-cyclohexadiene-1-carboxylate (SHCHC) to 2-succinylbenzoate (OSB). Does not show N-succinylamino acid racemase (NSAR) activity with N-succinyl-L-phenylglycine as substrate. The chain is o-succinylbenzoate synthase from Desulfotalea psychrophila (strain LSv54 / DSM 12343).